A 108-amino-acid chain; its full sequence is Pyrimidine/purine nucleoside phosphorylase (108 aa).

It belongs to the nucleoside phosphorylase PpnP family.

The enzyme catalyses a purine D-ribonucleoside + phosphate = a purine nucleobase + alpha-D-ribose 1-phosphate. It catalyses the reaction adenosine + phosphate = alpha-D-ribose 1-phosphate + adenine. The catalysed reaction is cytidine + phosphate = cytosine + alpha-D-ribose 1-phosphate. It carries out the reaction guanosine + phosphate = alpha-D-ribose 1-phosphate + guanine. The enzyme catalyses inosine + phosphate = alpha-D-ribose 1-phosphate + hypoxanthine. It catalyses the reaction thymidine + phosphate = 2-deoxy-alpha-D-ribose 1-phosphate + thymine. The catalysed reaction is uridine + phosphate = alpha-D-ribose 1-phosphate + uracil. It carries out the reaction xanthosine + phosphate = alpha-D-ribose 1-phosphate + xanthine. Catalyzes the phosphorolysis of diverse nucleosides, yielding D-ribose 1-phosphate and the respective free bases. Can use uridine, adenosine, guanosine, cytidine, thymidine, inosine and xanthosine as substrates. Also catalyzes the reverse reactions. The chain is Pyrimidine/purine nucleoside phosphorylase from Polaromonas naphthalenivorans (strain CJ2).